A 232-amino-acid polypeptide reads, in one-letter code: UPF0502 protein Aave_3438 (232 aa).

Belongs to the UPF0502 family.

This Paracidovorax citrulli (strain AAC00-1) (Acidovorax citrulli) protein is UPF0502 protein Aave_3438.